Reading from the N-terminus, the 687-residue chain is Polyphosphate kinase (687 aa).

An ATP-binding site is contributed by N45. Residues R375 and R405 each coordinate Mg(2+). H435 (phosphohistidine intermediate) is an active-site residue. ATP is bound by residues Y472, R568, and H596.

The protein belongs to the polyphosphate kinase 1 (PPK1) family. Requires Mg(2+) as cofactor. Post-translationally, an intermediate of this reaction is the autophosphorylated ppk in which a phosphate is covalently linked to a histidine residue through a N-P bond.

The enzyme catalyses [phosphate](n) + ATP = [phosphate](n+1) + ADP. Functionally, catalyzes the reversible transfer of the terminal phosphate of ATP to form a long-chain polyphosphate (polyP). The chain is Polyphosphate kinase from Paraburkholderia phytofirmans (strain DSM 17436 / LMG 22146 / PsJN) (Burkholderia phytofirmans).